A 159-amino-acid polypeptide reads, in one-letter code: Neuroglobin-1 (159 aa).

The 149-residue stretch at 3–151 folds into the Globin domain; the sequence is KLTEKEKELI…VVAAMSRGWA (149 aa). The heme b site is built by His66 and His98.

Belongs to the globin family. Monomer. Homodimers and homotetramers. Mainly monomeric but also detected as part of homodimers and homotetramers.

It localises to the cytoplasm. The protein localises to the cytosol. It is found in the mitochondrion matrix. It catalyses the reaction Fe(III)-heme b-[protein] + nitric oxide + H2O = Fe(II)-heme b-[protein] + nitrite + 2 H(+). Functionally, monomeric globin with a bis-histidyl six-coordinate heme-iron atom through which it can bind dioxygen, carbon monoxide and nitric oxide. Could help transport oxygen and increase its availability to the metabolically active neuronal tissues, though its low quantity in tissues as well as its high affinity for dioxygen, which may limit its oxygen-releasing ability, argue against it. The ferrous/deoxygenated form exhibits a nitrite reductase activity and it could produce nitric oxide which in turn inhibits cellular respiration in response to hypoxia. In its ferrous/deoxygenated state, it may also exhibit GDI (Guanine nucleotide Dissociation Inhibitor) activity toward heterotrimeric G-alpha proteins, thereby regulating signal transduction to facilitate neuroprotective responses in the wake of hypoxia and associated oxidative stress. This is Neuroglobin-1 (ngb1) from Oncorhynchus mykiss (Rainbow trout).